A 221-amino-acid polypeptide reads, in one-letter code: MSGWADERGGEGDGRIYVGNLPTDVREKDLEDLFYKYGRIREIELKNRHGLVPFAFVRFEDPRDAEDAIYGRNGYDYGQCRLRVEFPRTYGGRGGWPRGGRNGPPTRRSDFRVLVSGLPPSGSWQDLKDHMREAGDVCYADVQKDGVGMVEYLRKEDMEYALRKLDDTKFRSHEGETSYIRVYPERSTSYGYSRSRSGSRGRDSPYQSRGSPHYFSPFRPY.

2 consecutive RRM domains span residues 14-89 (GRIY…FPRT) and 111-187 (FRVL…PERS). A Glycyl lysine isopeptide (Lys-Gly) (interchain with G-Cter in SUMO2) cross-link involves residue K36. Positions 188 to 200 (TSYGYSRSRSGSR) are interaction with SAFB1. S189 is modified (phosphoserine). The segment covering 189-198 (SYGYSRSRSG) has biased composition (low complexity). A disordered region spans residues 189–221 (SYGYSRSRSGSRGRDSPYQSRGSPHYFSPFRPY). The residue at position 192 (Y192) is a Phosphotyrosine. Residues S193, S195, S204, S208, and S211 each carry the phosphoserine modification. Y214 carries the phosphotyrosine modification. S216 is modified (phosphoserine).

This sequence belongs to the splicing factor SR family. In terms of assembly, interacts with KHDRBS3. Interacts with HABP4. Interacts with NOL3/ARC/NOP30. Interacts with NSEP1/YB-1/YB1. Interacts with SAFB/SAFB1. Interacts with SRSF6/SFRS6. Interacts with TRA2B/SFRS10. Interacts with C1QBP. May also interact with DUSP11/PIR1. Post-translationally, extensively phosphorylated on serine residues in the RS domain. Expressed at high levels in the heart, kidney, pancreas and placenta, and at lower levels in the brain, liver, lung and skeletal muscle.

It is found in the nucleus. Plays a role in constitutive splicing and can modulate the selection of alternative splice sites. Represses the splicing of MAPT/Tau exon 10. This Homo sapiens (Human) protein is Serine/arginine-rich splicing factor 9 (SRSF9).